A 272-amino-acid chain; its full sequence is MTLQEQIMKALHVQPVIDPKVEIRKRVDFLKDYVKKTGAKGFVLGISGGQDSTLAGRLAQLAVEEIRNEGGNVTFIAVRLPYKVQKDEDDAQLALQFIQADQSVAFDIASTVDAFSNQYENLLGESLTDFNKGNVKARIRMVTQYAIGGQKGLLVIGTDHAAEAVTGFFTKFGDGGADLLPLTGLTKRQGRALLQELGADERLYLKMPTADLLDEKPGQADETELGITYDQLDDYLEGKAVPADVAEKIEKRYTVSEHKRQVPASMFDDWWK.

45–52 serves as a coordination point for ATP; sequence GISGGQDS. Asp-51 contributes to the Mg(2+) binding site. Arg-138 is a binding site for deamido-NAD(+). Thr-158 lines the ATP pocket. Residue Glu-163 participates in Mg(2+) binding. Deamido-NAD(+) contacts are provided by Lys-171 and Asp-178. ATP contacts are provided by Lys-187 and Thr-209. 258 to 259 contacts deamido-NAD(+); sequence HK.

The protein belongs to the NAD synthetase family. As to quaternary structure, homodimer.

It catalyses the reaction deamido-NAD(+) + NH4(+) + ATP = AMP + diphosphate + NAD(+) + H(+). Its pathway is cofactor biosynthesis; NAD(+) biosynthesis; NAD(+) from deamido-NAD(+) (ammonia route): step 1/1. In terms of biological role, catalyzes the ATP-dependent amidation of deamido-NAD to form NAD. Uses ammonia as a nitrogen source. In Bacillus cereus (strain ATCC 14579 / DSM 31 / CCUG 7414 / JCM 2152 / NBRC 15305 / NCIMB 9373 / NCTC 2599 / NRRL B-3711), this protein is NH(3)-dependent NAD(+) synthetase.